Reading from the N-terminus, the 237-residue chain is Class B acid phosphatase (237 aa).

An N-terminal signal peptide occupies residues 1-23; the sequence is MKKITLALSAVCLLFTLNHSANA. Catalysis depends on Asp69, which acts as the Nucleophile. Asp69 and Asp71 together coordinate Mg(2+). The active-site Proton donor is the Asp71. Residues 137–138 and Lys177 contribute to the substrate site; that span reads TG. Asp192 provides a ligand contact to Mg(2+).

Belongs to the class B bacterial acid phosphatase family. In terms of assembly, homotetramer. Mg(2+) serves as cofactor.

It localises to the periplasm. It catalyses the reaction a phosphate monoester + H2O = an alcohol + phosphate. Functionally, dephosphorylates several organic phosphate monoesters. Also has a phosphotransferase activity catalyzing the transfer of low-energy phosphate groups from organic phosphate monoesters to free hydroxyl groups of various organic compounds. This chain is Class B acid phosphatase, found in Salmonella arizonae (strain ATCC BAA-731 / CDC346-86 / RSK2980).